A 373-amino-acid polypeptide reads, in one-letter code: uncharacterized protein (373 aa).

This is an uncharacterized protein from Klebsiella pneumoniae.